The sequence spans 411 residues: Arginine deiminase (411 aa).

Cys401 serves as the catalytic Amidino-cysteine intermediate.

Belongs to the arginine deiminase family.

The protein localises to the cytoplasm. It catalyses the reaction L-arginine + H2O = L-citrulline + NH4(+). The protein operates within amino-acid degradation; L-arginine degradation via ADI pathway; carbamoyl phosphate from L-arginine: step 1/2. The protein is Arginine deiminase of Streptococcus equi subsp. equi (strain 4047).